A 160-amino-acid chain; its full sequence is Sodium/proline symporter (160 aa).

Transmembrane regions (helical) follow at residues 6 to 26 (PMLVTFIVYIFGMVLIGFIAW) and 68 to 88 (IFISGISESWIAIGLTLGAWI).

It belongs to the sodium:solute symporter (SSF) (TC 2.A.21) family.

Its subcellular location is the cell inner membrane. It carries out the reaction L-proline(in) + Na(+)(in) = L-proline(out) + Na(+)(out). Functionally, catalyzes the sodium-dependent uptake of extracellular L-proline. This is Sodium/proline symporter from Klebsiella oxytoca.